The chain runs to 216 residues: Large ribosomal subunit protein uL1y (216 aa).

This sequence belongs to the universal ribosomal protein uL1 family. As to quaternary structure, interacts with the GTPase NUG2.

The polypeptide is Large ribosomal subunit protein uL1y (RPL10AB) (Arabidopsis thaliana (Mouse-ear cress)).